Here is a 373-residue protein sequence, read N- to C-terminus: MSLNIHIKSGQDKWEVNVAPESTVLQFKEAINKANGIPVANQRLIYSGKILKDDQTVESYHIQDGHSVHLVKSQPKPQTASAAGANNATATGAAAGTGATPNMSSGQSAGFNPLADLTSARYAGYLNMPSADMFGPDGGALNNDSNNQDELLRMMENPIFQSQMNEMLSNPQMLDFMIQSNPQLQAMGPQARQMLQSPMFRQMLTNPDMIRQSMQFARMMDPNAGMGSAGGAASAFPAPGGDAPEEGSNTNTTSSSNTGNNAGTNAGTNAGANTAANPFASLLNPALNPFANAGNAASTGMPAFDPALLASMFQPPVQASQAEDTRPPEERYEHQLRQLNDMGFFDFDRNVAALRRSGGSVQGALDSLLNGDV.

A Ubiquitin-like domain is found at 1–76; sequence MSLNIHIKSG…SVHLVKSQPK (76 aa). Glycyl lysine isopeptide (Lys-Gly) (interchain with G-Cter in ubiquitin) cross-links involve residues K13 and K76. Residues 221–270 form a disordered region; the sequence is DPNAGMGSAGGAASAFPAPGGDAPEEGSNTNTTSSSNTGNNAGTNAGTNA. A compositionally biased stretch (low complexity) spans 231 to 270; sequence GAASAFPAPGGDAPEEGSNTNTTSSSNTGNNAGTNAGTNA. One can recognise a UBA domain in the interval 327–371; sequence PPEERYEHQLRQLNDMGFFDFDRNVAALRRSGGSVQGALDSLLNG.

It localises to the nucleus. Involved, with RAD23 in spindle pole body duplication. Involved in the ubiquitin-proteasome proteolytic pathway. The sequence is that of Ubiquitin domain-containing protein DSK2 (DSK2) from Saccharomyces cerevisiae (strain ATCC 204508 / S288c) (Baker's yeast).